Reading from the N-terminus, the 272-residue chain is Ribosomal RNA small subunit methyltransferase A (272 aa).

Residues asparagine 18, leucine 20, glycine 45, glutamate 66, aspartate 91, and asparagine 113 each coordinate S-adenosyl-L-methionine.

The protein belongs to the class I-like SAM-binding methyltransferase superfamily. rRNA adenine N(6)-methyltransferase family. RsmA subfamily.

The protein localises to the cytoplasm. It carries out the reaction adenosine(1518)/adenosine(1519) in 16S rRNA + 4 S-adenosyl-L-methionine = N(6)-dimethyladenosine(1518)/N(6)-dimethyladenosine(1519) in 16S rRNA + 4 S-adenosyl-L-homocysteine + 4 H(+). Its function is as follows. Specifically dimethylates two adjacent adenosines (A1518 and A1519) in the loop of a conserved hairpin near the 3'-end of 16S rRNA in the 30S particle. May play a critical role in biogenesis of 30S subunits. The protein is Ribosomal RNA small subunit methyltransferase A of Yersinia enterocolitica serotype O:8 / biotype 1B (strain NCTC 13174 / 8081).